We begin with the raw amino-acid sequence, 224 residues long: Pyridoxine/pyridoxamine 5'-phosphate oxidase (224 aa).

Residues 19-22 (RGEY) and K81 contribute to the substrate site. Residues 76 to 81 (RSVLCK), 91 to 92 (FT), K98, and Q120 each bind FMN. Y138 and R142 together coordinate substrate. FMN contacts are provided by residues 155-156 (QS) and W201. 207 to 209 (RMH) provides a ligand contact to substrate. R211 provides a ligand contact to FMN.

It belongs to the pyridoxamine 5'-phosphate oxidase family. Homodimer. It depends on FMN as a cofactor.

It carries out the reaction pyridoxamine 5'-phosphate + O2 + H2O = pyridoxal 5'-phosphate + H2O2 + NH4(+). The enzyme catalyses pyridoxine 5'-phosphate + O2 = pyridoxal 5'-phosphate + H2O2. It participates in cofactor metabolism; pyridoxal 5'-phosphate salvage; pyridoxal 5'-phosphate from pyridoxamine 5'-phosphate: step 1/1. The protein operates within cofactor metabolism; pyridoxal 5'-phosphate salvage; pyridoxal 5'-phosphate from pyridoxine 5'-phosphate: step 1/1. Catalyzes the oxidation of either pyridoxine 5'-phosphate (PNP) or pyridoxamine 5'-phosphate (PMP) into pyridoxal 5'-phosphate (PLP). This Mycobacterium bovis (strain ATCC BAA-935 / AF2122/97) protein is Pyridoxine/pyridoxamine 5'-phosphate oxidase.